The chain runs to 1371 residues: MNKVYSLKYCPVTGGLIVVSELASRVIKKTCRRLTHILLAGIPAVYLYYPQISQAGIVRSDIAYQIYRDFAENKGLFVPGATDIPVYDKDGKLVGRLDKAPMADFSSVSSNGVATLVSPQYIVSVKHNGGYQSVSFGNGKNTYSLVDRNNHSSVDFHAPRLNKLVTEVIPSAITSEGTKANAYKDTERYTAFYRVGSGTQYTKDKDGNLVKVAGGYAFKTGGTTGVPLISDATIVSNPGQTYNPVNGPLPDYGAPGDSGSPLFAYDEQQKKWVIVAVLRAYAGINGATNWWNVIPTDYLNQVMQDDFDAPVDFVSGLPPLNWTYDKTSGTGTLSQGSKNWTMHGQKDNDLNAGKNLVFSGQNGAIVLKDSVTQGAGYLEFKDSYTVSAESGKTWTGAGIITDKGTNVTWKVNGVAGDNLHKLGEGTLTINGTGVNPGGLKTGDGTVVLNQQADTAGNVQAFSSVNLASGRPTVVLGDARQVNPDNISWGYRGGKLDLNGNAVTFTRLQAADYGAVITNNAQQKSRLLLDLKAQDTNVSVPIGSISPFGGTGTPGNLYSMILNGQTRFYILKSASYGNTLWGNSLNDPAQWEFVGTDKNKAVQTVKDRILAGRAKQPVIFHGQLTGNMDVTIPQLPGGRKVILDGSVNLPEGTLSEDSGTLIFQGHPVIHASVSGSAPVSLNQKDWENRQFIMKTLSLKDADFHLSRNASLNSDIKSDNSHITLGSDRVFVDKNDGTGNYVILEEGTSVPDTVNDRSQYEGNITLDHNSTLDIGSRFTGGIEAYDSAVSITSPDVLLTAPGAFAGSSLTVHDGGHLTALNGLFSDGHIQAGKNSKITLSGTPVKDTANQYAPAVYLTDGYDLTGDNATLEITRGAHASGDIHASAASTVTIGSDTPAELASAETTASAFAGSLLEGYNAAFNGAITGGRADVSMHNALWTLGGDSAIHTLTVRNSRISSEGDRTFRTLTVNKLDATGSDFVLRTDLKNADKINVTEKATGSDNSLNVSFMKDPAQGQSLNIPLVTAPAGTSAEMFKAGTRMIGFSRVTPTLHVDTSGGNTKWILDGFKAEADKAAAAKADSFMNAGYKNFMTEVNNLNKRMGDLRDTNGDAGAWARIMSGAGSADGGYSDNYTHVQVGFDKKHELDGVDLFTGVTMTYTDSSADSHAFSGKTKSVGGGLYASALFESGAYIDLIGKYIHHDNDYTGNFAGLGTKHYNTHSWYAGAETGYRYHLTEETFIEPQAELVYGAVSGKTFRWKDGDMDLSMKNRDFSPLIGRTGIELGKTFSGKDWSVTARAGTSWQFDLLNNGETVLRDASGEKRIKGEKDSRMLFNVGMNAQIKDNMRFGLEFEKSAFGKYNVDNAVNANFRYMF.

A signal peptide spans 1–55 (MNKVYSLKYCPVTGGLIVVSELASRVIKKTCRRLTHILLAGIPAVYLYYPQISQA). The region spanning 56 to 301 (GIVRSDIAYQ…NVIPTDYLNQ (246 aa)) is the Peptidase S6 domain. Residues His127, Asp155, and Ser258 each act as charge relay system in the active site. The region spanning 1105 to 1371 (DTNGDAGAWA…AVNANFRYMF (267 aa)) is the Autotransporter domain.

Post-translationally, cleaved to release the mature protein from the outer membrane.

It is found in the periplasm. Its subcellular location is the secreted. The protein localises to the cell surface. The protein resides in the cell outer membrane. In terms of biological role, involved in virulence of uropathogenic E.coli although it is not known how it contributes to it. Has no mucinase activity. This Escherichia coli O6:H1 (strain CFT073 / ATCC 700928 / UPEC) protein is Serine protease pic autotransporter (pic).